The primary structure comprises 414 residues: Gamma-glutamyl phosphate reductase (414 aa).

Belongs to the gamma-glutamyl phosphate reductase family.

The protein resides in the cytoplasm. It carries out the reaction L-glutamate 5-semialdehyde + phosphate + NADP(+) = L-glutamyl 5-phosphate + NADPH + H(+). It functions in the pathway amino-acid biosynthesis; L-proline biosynthesis; L-glutamate 5-semialdehyde from L-glutamate: step 2/2. Catalyzes the NADPH-dependent reduction of L-glutamate 5-phosphate into L-glutamate 5-semialdehyde and phosphate. The product spontaneously undergoes cyclization to form 1-pyrroline-5-carboxylate. The polypeptide is Gamma-glutamyl phosphate reductase (Caldanaerobacter subterraneus subsp. tengcongensis (strain DSM 15242 / JCM 11007 / NBRC 100824 / MB4) (Thermoanaerobacter tengcongensis)).